Here is a 172-residue protein sequence, read N- to C-terminus: Centrin-1 (172 aa).

The tract at residues 1-31 (MASGFKKPSAASTGQKRKVAPKPELTEDQKQ) is disordered. EF-hand domains are found at residues 28–63 (DQKQ…LGFE), 64–99 (PRKE…KMSE), 101–136 (DTKE…LGEN), and 137–172 (LTDE…TSLY). 5 residues coordinate Ca(2+): Asp-41, Asp-43, Ser-45, Thr-47, and Glu-52. Asp-150, Asp-152, Asp-154, Glu-156, and Glu-161 together coordinate Ca(2+).

Belongs to the centrin family. In terms of assembly, monomer. Interacts with CIMAP3. Interacts with USP49.

The protein resides in the cytoplasm. Its subcellular location is the cytoskeleton. It localises to the microtubule organizing center. It is found in the centrosome. The protein localises to the cell projection. The protein resides in the cilium. In terms of biological role, plays a fundamental role in microtubule-organizing center structure and function. Plays a role in sperm cilia formation. This is Centrin-1 from Homo sapiens (Human).